The following is a 1209-amino-acid chain: Putative lysine-specific demethylase JMJ16 (1209 aa).

One can recognise a JmjN domain in the interval 146-187; it reads APVFYPSEEEFEDTLNYIAKIRPEAEKYGICRIVPPPSWKPP. The short motif at 217 to 224 is the Nuclear localization signal element; it reads MKKISKLP. A JmjC domain is found at 361–527; it reads KYAKSGWNLN…HGQIAIELYC (167 aa). Positions 407, 409, and 495 each coordinate Fe cation. Residues Cys617, Cys620, Cys631, Cys633, Cys640, His643, Cys648, and Cys650 each contribute to the Zn(2+) site. A C5HC2 zinc finger spans residues 617 to 667; sequence CCICFFDLHLSAAGCRCSPEKYSCLTHVKELCSCPWVTKYFLFRYDIDELN. Residues 872-900 are disordered; it reads DTRNTISLPTNDQKTMRRDVPSSTSHAEV. The span at 875–884 shows a compositional bias: polar residues; the sequence is NTISLPTNDQ. The FYR N-terminal domain maps to 974–1032; that stretch reads VVRRINCNVEPLSYGCVLSGKSWCSRRAIFPKGFRSRVKYINILDPTNMCFYISEILDA. Residues 1034–1124 enclose the FYR C-terminal domain; that stretch reads RNSPLFMVYL…RVCTDYWDSR (91 aa).

It belongs to the JARID1 histone demethylase family. In terms of assembly, interacts with MMD1 in the nucleus of male meiocytes, especially on pachytene chromosomes. Requires Fe(2+) as cofactor. As to expression, confined to inflorescences.

Its subcellular location is the nucleus. The enzyme catalyses N(6),N(6),N(6)-trimethyl-L-lysyl(4)-[histone H3] + 2-oxoglutarate + O2 = N(6),N(6)-dimethyl-L-lysyl(4)-[histone H3] + formaldehyde + succinate + CO2. The catalysed reaction is N(6),N(6)-dimethyl-L-lysyl(4)-[histone H3] + 2-oxoglutarate + O2 = N(6)-methyl-L-lysyl(4)-[histone H3] + formaldehyde + succinate + CO2. It catalyses the reaction N(6)-methyl-L-lysyl(4)-[histone H3] + 2-oxoglutarate + O2 = L-lysyl(4)-[histone H3] + formaldehyde + succinate + CO2. Its function is as follows. Functions as a histone H3 'Lys-4' (H3K4me) demethylase involved in the negative regulation of gene expression. Active on H3K4me1, H3K4me2 and H3K4me3. Not active on mono-, di- and trimethylated H3K9, H3K27 and H3K36 in somatic cells. However, also active on H3K9 when in complex with MMD1, a meiocyte-specific histone reader. Together with MMD1, promotes gene expression in male meiocytes in an H3K9me3-dependent manner, and contributes to meiotic chromosome condensation by triggering some condensin promoters (e.g. CAP-D3 and CAP-H). Together with JMJ14 and JMJ17, required for plant growth and development. Represses leaf senescence in an age-dependent manner by demethylating H3K4me3 activating histone marks at senescence-associated genes (SAGs) loci, including WRKY53 and SAG201, thus preventing their premature expression. The protein is Putative lysine-specific demethylase JMJ16 of Arabidopsis thaliana (Mouse-ear cress).